A 44-amino-acid polypeptide reads, in one-letter code: Cuticle protein CP459 (44 aa).

A run of 2 repeats spans residues 3–20 (LLKG…KRLL) and 27–44 (VLLT…NVQF).

In terms of tissue distribution, calcified shell.

This is Cuticle protein CP459 from Cancer pagurus (Rock crab).